The sequence spans 88 residues: Small ribosomal subunit protein bS20 (88 aa).

It belongs to the bacterial ribosomal protein bS20 family.

Functionally, binds directly to 16S ribosomal RNA. This chain is Small ribosomal subunit protein bS20, found in Legionella pneumophila (strain Paris).